A 476-amino-acid polypeptide reads, in one-letter code: Protein DETOXIFICATION 4 (476 aa).

12 helical membrane passes run 35-55 (AVPMATVTIAQYLLPVISVMV), 66-86 (GVALATSFTNVSGFSIMFGLV), 117-137 (IPICVLISILWIYMEKLLISL), 154-174 (LIPTLFAHAIVLPLTRFLLAQ), 176-196 (LVLPLLYFALTTLLFHIAVCW), 208-228 (GAALAISVSFWFFAMTLSCYV), 260-280 (AAMLCLEWWLFELLILCSGLL), 289-309 (VLSICLTTATLHYVIPVGVAA), 332-352 (LAGLCLWLVESSFFSILLFAF), 370-390 (VADLSPLLCLSFVLDGFTAVL), 408-428 (VVAYYLVGAPVGIYLAFSCEL), and 433-453 (LWCGVVVGSAVQAIILAIVTA).

It belongs to the multi antimicrobial extrusion (MATE) (TC 2.A.66.1) family.

Its subcellular location is the membrane. This chain is Protein DETOXIFICATION 4, found in Arabidopsis thaliana (Mouse-ear cress).